The chain runs to 386 residues: Adiponectin receptor protein 2 (386 aa).

Positions 1–71 (MNEPTENRLG…HEYSDEAPQE (71 aa)) are disordered. The Cytoplasmic segment spans residues 1–147 (MNEPTENRLG…SIFRIHTETG (147 aa)). The span at 15-41 (PEPDIRLRKGHQLDGTRRGDNDSHQGD) shows a compositional bias: basic and acidic residues. A helical membrane pass occupies residues 148–168 (NIWTHLLGCVFFLCLGIFYMF). Over 169 to 181 (RPNISFVAPLQEK) the chain is Extracellular. A helical transmembrane segment spans residues 182 to 202 (VVFGLFFLGAILCLSFSWLFH). His-202 provides a ligand contact to Zn(2+). Topologically, residues 203–213 (TVYCHSEGVSR) are cytoplasmic. The chain crosses the membrane as a helical span at residues 214 to 234 (LFSKLDYSGIALLIMGSFVPW). The Extracellular portion of the chain corresponds to 235–245 (LYYSFYCNPQP). The helical transmembrane segment at 246 to 266 (CFIYLIVICVLGIAAIIVSQW) threads the bilayer. At 267–273 (DMFATPQ) the chain is on the cytoplasmic side. A helical membrane pass occupies residues 274 to 294 (YRGVRAGVFLGLGLSGIIPTL). The Extracellular portion of the chain corresponds to 295-309 (HYVISEGFLKAATIG). Residues 310–330 (QIGWLMLMASLYITGAALYAA) form a helical membrane-spanning segment. Residues 331–348 (RIPERFFPGKCDIWFHSH) are Cytoplasmic-facing. His-348 and His-352 together coordinate Zn(2+). A helical membrane pass occupies residues 349 to 369 (QLFHIFVVAGAFVHFHGVSNL). The Extracellular portion of the chain corresponds to 370–386 (QEFRFMIGGGCSEEDAL).

This sequence belongs to the ADIPOR family. In terms of assembly, may form homooligomers and heterooligomers with ADIPOR1. Interacts with APPL2 (via BAR domain); ADIPOQ dissociates this interaction. Ubiquitous. Highly expressed in skeletal muscle, liver and placenta. Weakly expressed in brain, heart, colon, spleen, kidney, thymus, small intestine, peripheral blood leukocytes and lung.

The protein localises to the cell membrane. Receptor for ADIPOQ, an essential hormone secreted by adipocytes that regulates glucose and lipid metabolism. Required for normal body fat and glucose homeostasis. ADIPOQ-binding activates a signaling cascade that leads to increased PPARA activity, and ultimately to increased fatty acid oxidation and glucose uptake. Has intermediate affinity for globular and full-length adiponectin. Required for normal revascularization after chronic ischemia caused by severing of blood vessels. The protein is Adiponectin receptor protein 2 of Homo sapiens (Human).